The sequence spans 236 residues: Leucyl/phenylalanyl-tRNA--protein transferase (236 aa).

This sequence belongs to the L/F-transferase family.

Its subcellular location is the cytoplasm. The enzyme catalyses N-terminal L-lysyl-[protein] + L-leucyl-tRNA(Leu) = N-terminal L-leucyl-L-lysyl-[protein] + tRNA(Leu) + H(+). It catalyses the reaction N-terminal L-arginyl-[protein] + L-leucyl-tRNA(Leu) = N-terminal L-leucyl-L-arginyl-[protein] + tRNA(Leu) + H(+). The catalysed reaction is L-phenylalanyl-tRNA(Phe) + an N-terminal L-alpha-aminoacyl-[protein] = an N-terminal L-phenylalanyl-L-alpha-aminoacyl-[protein] + tRNA(Phe). In terms of biological role, functions in the N-end rule pathway of protein degradation where it conjugates Leu, Phe and, less efficiently, Met from aminoacyl-tRNAs to the N-termini of proteins containing an N-terminal arginine or lysine. The polypeptide is Leucyl/phenylalanyl-tRNA--protein transferase (Shewanella sp. (strain MR-4)).